The chain runs to 403 residues: Nucleolar protein 13 (403 aa).

Composition is skewed to basic and acidic residues over residues 1–35 and 75–97; these read MSET…RKAE and KSIE…KDAQ. 2 disordered regions span residues 1 to 43 and 72 to 116; these read MSET…IDLK and IDPK…EVVK. Ser-2 is modified (N-acetylserine). Ser-2 carries the phosphoserine modification. The span at 99-108 shows a compositional bias: polar residues; that stretch reads EESTINTPTG. Thr-105 bears the Phosphothreonine mark. RRM domains lie at 125 to 219 and 239 to 317; these read YGVW…DSEN and RILF…YGED. The span at 313–329 shows a compositional bias: basic and acidic residues; it reads EYGEDRSKRQVRKKVEN. The segment at 313 to 403 is disordered; it reads EYGEDRSKRQ…PSQGKKVKFD (91 aa). A compositionally biased stretch (polar residues) spans 330-344; that stretch reads VSRNNSSSFDISNNK. Ser-335 carries the post-translational modification Phosphoserine. A compositionally biased stretch (basic and acidic residues) spans 345–361; it reads GYDRAGQDNGSKPEYKR. Residues 371-381 are compositionally biased toward polar residues; the sequence is DSNNRTKSSVA.

It is found in the nucleus. The protein resides in the nucleolus. The chain is Nucleolar protein 13 (NOP13) from Saccharomyces cerevisiae (strain ATCC 204508 / S288c) (Baker's yeast).